Here is a 312-residue protein sequence, read N- to C-terminus: R2-like ligand binding oxidase (312 aa).

Mn(2+) contacts are provided by E68, E101, and H104. A cross-link (3-(O4'-tyrosyl)-valine (Val-Tyr)) is located at residues 71-162 (VTQDIQPFMA…AAQVRASATY (92 aa)). E101 is a Fe cation binding site. Residues E167, E202, and H205 each contribute to the Fe cation site.

It belongs to the ribonucleoside diphosphate reductase small chain family. R2-like ligand binding oxidase subfamily. As to quaternary structure, homodimer. It depends on Fe cation as a cofactor. Mn(2+) serves as cofactor.

Probable oxidase that might be involved in lipid metabolism. The polypeptide is R2-like ligand binding oxidase (Mycobacterium sp. (strain JLS)).